The following is a 574-amino-acid chain: Lipase maturation factor 1 (574 aa).

The disordered stretch occupies residues 1-39; it reads MRPDSLVMAAPEGSLRKRKVGGAEHSPASQPSLARDPAD. Over 1–49 the chain is Cytoplasmic; the sequence is MRPDSLVMAAPEGSLRKRKVGGAEHSPASQPSLARDPADSPARLHTGTF. A helical membrane pass occupies residues 50–72; the sequence is WLTRIVLLRALAFIYFVAFLVAF. The Lumenal segment spans residues 73–127; sequence NQNKALIGDRGLLPCKLYLKNVQEYFQGSTGWAAWTYAPTIMWLLDWSDMNFNLD. Residues 128 to 151 traverse the membrane as a helical segment; that stretch reads LIALLGLGISSFVLVTGCANMILM. The Cytoplasmic portion of the chain corresponds to 152 to 207; the sequence is TALWALYMSLVNVGQIWYSFGWESQLLETGFLGIFLSPLWTLSRLPKNTPTSQIVL. Residues 208 to 221 traverse the membrane as a helical segment; sequence WGFRWLIFRIMLGA. Over 222-292 the chain is Lumenal; sequence GLIKVRGDKC…LGRRMRILHG (71 aa). Residues 293–321 traverse the membrane as a helical segment; the sequence is VLQILFQVILIISGNLSFLNWLTIVPSLA. Residues 322–367 lie on the Cytoplasmic side of the membrane; the sequence is CFDDAALGFLFPSGPQGLKKQVLEIQREDTQRVQPKPRDRGCLVRQ. A helical membrane pass occupies residues 368 to 388; the sequence is VVNISLGILVAWLSVPVVINL. At 389-574 the chain is on the lumenal side; the sequence is LSSRQIMNTS…LPEPPSRHTR (186 aa).

Belongs to the lipase maturation factor family. As to quaternary structure, interacts with LPL and SEL1L. In terms of tissue distribution, expressed in all tissues synthesizing lipoprotein lipase (Lpl) and hepatic lipase (Lipc), including adipose tissue, skeletal muscle, heart, and liver. Expressed at higher levels in tissues that express little or no lipase activity such as testis and pancreas suggesting additional functions in these tissues.

It is found in the endoplasmic reticulum membrane. In terms of biological role, involved in the maturation of specific proteins in the endoplasmic reticulum. Required for maturation and transport of active lipoprotein lipase (LPL) through the secretory pathway. Each LMF1 molecule chaperones 50 or more molecules of LPL. This Mus musculus (Mouse) protein is Lipase maturation factor 1 (Lmf1).